A 536-amino-acid chain; its full sequence is Chaperonin GroEL (536 aa).

ATP is bound by residues 29–32 (TLGP), 86–90 (DGTTT), Gly-412, and Asp-493.

It belongs to the chaperonin (HSP60) family. In terms of assembly, forms a cylinder of 14 subunits composed of two heptameric rings stacked back-to-back. Interacts with the co-chaperonin GroES.

It localises to the cytoplasm. The enzyme catalyses ATP + H2O + a folded polypeptide = ADP + phosphate + an unfolded polypeptide.. In terms of biological role, together with its co-chaperonin GroES, plays an essential role in assisting protein folding. The GroEL-GroES system forms a nano-cage that allows encapsulation of the non-native substrate proteins and provides a physical environment optimized to promote and accelerate protein folding. The protein is Chaperonin GroEL of Onion yellows phytoplasma (strain OY-M).